A 554-amino-acid chain; its full sequence is Hyaluronan synthase 3 (554 aa).

Topologically, residues 1-15 (MPVQLTTALRVVGTS) are cytoplasmic. The helical transmembrane segment at 16–36 (LFALVVLGGILAAYVTGYQFI) threads the bilayer. Residues 37-44 (HTEKHYLS) lie on the Extracellular side of the membrane. Residues 45–65 (FGLYGAILGLHLLIQSLFAFL) traverse the membrane as a helical segment. The Cytoplasmic portion of the chain corresponds to 66 to 378 (EHRRMRRAGR…NSLWFHKHHL (313 aa)). Residues 379–399 (WMTYESVVTGFFPFFLIATVI) form a helical membrane-spanning segment. At 400-409 (QLFYRGRIWN) the chain is on the extracellular side. Residues 410-430 (ILLFLLTVQLVGIIKATYACF) form a helical membrane-spanning segment. Residues 431 to 441 (LRGNAEMIFMS) lie on the Cytoplasmic side of the membrane. A helical transmembrane segment spans residues 442–462 (LYSLLYMSSLLPAKIFAIATI). Asparagine 463 carries N-linked (GlcNAc...) asparagine glycosylation. Residues 463 to 474 (NKSGWGTSGRKT) lie on the Extracellular side of the membrane. Residues 475-495 (IVVNFIGLIPVSIWVAVLLGG) form a helical membrane-spanning segment. Residues 496 to 516 (LAYTAYCQDLFSETELAFLVS) are Cytoplasmic-facing. The helical transmembrane segment at 517-537 (GAILYGCYWVALLMLYLAIIA) threads the bilayer. The Extracellular portion of the chain corresponds to 538–554 (RRCGKKPEQYSLAFAEV).

It belongs to the NodC/HAS family. It depends on Mg(2+) as a cofactor. Post-translationally, O-GlcNAcylation increases the hyaluronan synthase activity, HAS3 stability and its plasma membrane residence. The concentration of UDP-GlcNAc controls the level of O-GlcNAc modification.

It is found in the cell membrane. The protein localises to the golgi apparatus membrane. It localises to the golgi apparatus. Its subcellular location is the trans-Golgi network membrane. The protein resides in the cytoplasmic vesicle. The catalysed reaction is [hyaluronan](n) + UDP-N-acetyl-alpha-D-glucosamine = N-acetyl-beta-D-glucosaminyl-(1-&gt;4)-[hyaluronan](n) + UDP + H(+). It carries out the reaction N-acetyl-beta-D-glucosaminyl-(1-&gt;4)-[hyaluronan](n) + UDP-alpha-D-glucuronate = [hyaluronan](n+1) + UDP + H(+). The protein operates within glycan biosynthesis; hyaluronan biosynthesis. Catalyzes the addition of GlcNAc or GlcUA monosaccharides to the nascent hyaluronan polymer. Therefore, it is essential to hyaluronan synthesis a major component of most extracellular matrices that has a structural role in tissues architectures and regulates cell adhesion, migration and differentiation. This is one of three isoenzymes responsible for cellular hyaluronan synthesis. In Mus musculus (Mouse), this protein is Hyaluronan synthase 3 (Has3).